The primary structure comprises 917 residues: Isoleucine--tRNA ligase (917 aa).

L-isoleucyl-5'-AMP contacts are provided by P56, H67, E554, G555, D557, Q558, and H585. The short motif at 57-67 is the 'HIGH' region element; it reads PYANGNLHMGH. The 'KMSKS' region signature appears at 595-599; sequence KMSKS. Residue K598 coordinates ATP. The tRNA(Ile) site is built by R632 and Q640. Zn(2+)-binding residues include C886, C889, C906, and C909.

It belongs to the class-I aminoacyl-tRNA synthetase family. IleS type 1 subfamily. In terms of assembly, monomer. It depends on Zn(2+) as a cofactor.

The protein localises to the cytoplasm. It catalyses the reaction tRNA(Ile) + L-isoleucine + ATP = L-isoleucyl-tRNA(Ile) + AMP + diphosphate. In terms of biological role, catalyzes the attachment of isoleucine to tRNA(Ile). As IleRS can inadvertently accommodate and process structurally similar amino acids such as valine, to avoid such errors it has two additional distinct tRNA(Ile)-dependent editing activities. One activity is designated as 'pretransfer' editing and involves the hydrolysis of activated Val-AMP. The other activity is designated 'posttransfer' editing and involves deacylation of mischarged Val-tRNA(Ile). In Staphylococcus aureus, this protein is Isoleucine--tRNA ligase (ileS).